Consider the following 89-residue polypeptide: Small ribosomal subunit protein uS19 (89 aa).

Belongs to the universal ribosomal protein uS19 family.

In terms of biological role, protein S19 forms a complex with S13 that binds strongly to the 16S ribosomal RNA. The polypeptide is Small ribosomal subunit protein uS19 (Bacteroides fragilis (strain YCH46)).